The sequence spans 300 residues: Tyrosine recombinase XerC (300 aa).

The region spanning 4-90 (VALSLDVSRF…ALRSFFDWLV (87 aa)) is the Core-binding (CB) domain. Positions 111-290 (HLPKNIDVDD…DFQHLASVYD (180 aa)) constitute a Tyr recombinase domain. Catalysis depends on residues Arg-150, Lys-174, His-242, Arg-245, and His-268. Tyr-277 serves as the catalytic O-(3'-phospho-DNA)-tyrosine intermediate.

Belongs to the 'phage' integrase family. XerC subfamily. Forms a cyclic heterotetrameric complex composed of two molecules of XerC and two molecules of XerD, in which XerC interacts with XerD via its C-terminal region, XerD interacts with XerC via its C-terminal region and so on.

The protein resides in the cytoplasm. Its activity is regulated as follows. FtsK may regulate the catalytic switch between XerC and XerD in the heterotetrameric complex during the two steps of the recombination process. Site-specific tyrosine recombinase, which acts by catalyzing the cutting and rejoining of the recombining DNA molecules. Binds cooperatively to specific DNA consensus sequences that are separated from XerD binding sites by a short central region, forming the heterotetrameric XerC-XerD complex that recombines DNA substrates. The complex is essential to convert dimers of the bacterial chromosome into monomers to permit their segregation at cell division. It also contributes to the segregational stability of plasmids. In the complex XerC specifically exchanges the top DNA strands. This is Tyrosine recombinase XerC from Salmonella typhi.